A 79-amino-acid chain; its full sequence is Sec-independent protein translocase protein TatA (79 aa).

Residues 1–21 (MGGFTSIWHWVIVLLVIVLLF) form a helical membrane-spanning segment. Residues 48 to 79 (EEEAKNEPKTLDAQATQTKVHESSEIKSKQES) are disordered. Residues 66-79 (KVHESSEIKSKQES) are compositionally biased toward basic and acidic residues.

The protein belongs to the TatA/E family. In terms of assembly, the Tat system comprises two distinct complexes: a TatABC complex, containing multiple copies of TatA, TatB and TatC subunits, and a separate TatA complex, containing only TatA subunits. Substrates initially bind to the TatABC complex, which probably triggers association of the separate TatA complex to form the active translocon.

It localises to the cell inner membrane. Part of the twin-arginine translocation (Tat) system that transports large folded proteins containing a characteristic twin-arginine motif in their signal peptide across membranes. TatA could form the protein-conducting channel of the Tat system. This chain is Sec-independent protein translocase protein TatA, found in Helicobacter pylori (strain ATCC 700392 / 26695) (Campylobacter pylori).